A 137-amino-acid chain; its full sequence is Envelope glycoprotein L (137 aa).

The first 22 residues, 1-22 (MRAVGVFLAICLVTIFVLPTWG), serve as a signal peptide directing secretion. The interval 23 to 128 (NWAYPCCHVT…SVEDLFGANL (106 aa)) is interaction with gH. Intrachain disulfides connect cysteine 28–cysteine 56 and cysteine 29–cysteine 79.

The protein belongs to the herpesviridae glycoprotein L family. Interacts with glycoprotein H (gH); this interaction is necessary for the correct processing and cell surface expression of gH. The heterodimer gH/gL seems to interact with gB trimers during fusion. The heterodimer gH/gL interacts with host EPHA2 to facilitate virus internalization and fusion.

It localises to the virion membrane. The protein resides in the host cell membrane. The protein localises to the host Golgi apparatus. Its subcellular location is the host trans-Golgi network. Functionally, the heterodimer glycoprotein H-glycoprotein L is required for the fusion of viral and plasma membranes leading to virus entry into the host cell. Acts as a functional inhibitor of gH and maintains gH in an inhibited form. Upon binding to host integrins, gL dissociates from gH leading to activation of the viral fusion glycoproteins gB and gH. Fusion of EBV with B-lymphocytes requires the additional receptor-binding protein gp42, which forms a complex with gH/gL. The heterodimer gH/gL targets also host EPHA2 to promote viral entry. This is Envelope glycoprotein L from Homo sapiens (Human).